Reading from the N-terminus, the 170-residue chain is Adenine phosphoribosyltransferase (170 aa).

It belongs to the purine/pyrimidine phosphoribosyltransferase family. In terms of assembly, homodimer.

Its subcellular location is the cytoplasm. It catalyses the reaction AMP + diphosphate = 5-phospho-alpha-D-ribose 1-diphosphate + adenine. Its pathway is purine metabolism; AMP biosynthesis via salvage pathway; AMP from adenine: step 1/1. Its function is as follows. Catalyzes a salvage reaction resulting in the formation of AMP, that is energically less costly than de novo synthesis. The chain is Adenine phosphoribosyltransferase from Bacillus pumilus (strain SAFR-032).